Consider the following 96-residue polypeptide: Protein Vpr (96 aa).

Positions 1–42 (MEQAPEDQGPQREPYNEWTIEILEELKREAVRHFPRPWLHDL) are homooligomerization. 3 positions are modified to phosphoserine; by host: Ser-79, Ser-94, and Ser-96.

It belongs to the HIV-1 VPR protein family. As to quaternary structure, homooligomer, may form homodimer. Interacts with p6-gag region of the Pr55 Gag precursor protein through a (Leu-X-X)4 motif near the C-terminus of the P6gag protein. Interacts with host UNG. May interact with host RAD23A/HHR23A. Interacts with host VPRBP/DCAF1, leading to hijack the CUL4A-RBX1-DDB1-DCAF1/VPRBP complex, mediating ubiquitination of host proteins such as TERT and ZGPAT and arrest of the cell cycle in G2 phase. Phosphorylated on several residues by host. These phosphorylations regulate VPR activity for the nuclear import of the HIV-1 pre-integration complex.

Its subcellular location is the virion. It is found in the host nucleus. The protein resides in the host extracellular space. Functionally, during virus replication, may deplete host UNG protein, and incude G2-M cell cycle arrest. Acts by targeting specific host proteins for degradation by the 26S proteasome, through association with the cellular CUL4A-DDB1 E3 ligase complex by direct interaction with host VPRPB/DCAF-1. Cell cycle arrest reportedly occurs within hours of infection and is not blocked by antiviral agents, suggesting that it is initiated by the VPR carried into the virion. Additionally, VPR induces apoptosis in a cell cycle dependent manner suggesting that these two effects are mechanistically linked. Detected in the serum and cerebrospinal fluid of AIDS patient, VPR may also induce cell death to bystander cells. During virus entry, plays a role in the transport of the viral pre-integration (PIC) complex to the host nucleus. This function is crucial for viral infection of non-dividing macrophages. May act directly at the nuclear pore complex, by binding nucleoporins phenylalanine-glycine (FG)-repeat regions. This chain is Protein Vpr, found in Human immunodeficiency virus type 1 group M subtype K (isolate 97ZR-EQTB11) (HIV-1).